Here is a 338-residue protein sequence, read N- to C-terminus: Cytoskeleton protein RodZ (338 aa).

At 1–111 (MNTEATHDQN…LGKRRKKRDG (111 aa)) the chain is on the cytoplasmic side. Residues 19 to 71 (LRNAREQLGLSQQAVAERLCLKVSTVRDIEEDKAPADLASTFLRGYIRSYARL) enclose the HTH cro/C1-type domain. Positions 30 to 49 (QQAVAERLCLKVSTVRDIEE) form a DNA-binding region, H-T-H motif. The helical; Signal-anchor for type II membrane protein transmembrane segment at 112-132 (WLMTFTWLVLFVVIGLSGAWW) threads the bilayer. Over 133-338 (WQDHKAQQEE…TLNAEQSPAQ (206 aa)) the chain is Periplasmic. Residues 155-169 (NANGTNSQSIPLENS) show a composition bias toward polar residues. Residues 155–240 (NANGTNSQSI…TTPDTATPLP (86 aa)) are disordered. The span at 170 to 188 (TTTVPEATPAPAAPVDTTA) shows a compositional bias: low complexity. The span at 203-217 (EPQQNAVVPPSQANV) shows a compositional bias: polar residues. Low complexity predominate over residues 218 to 240 (DTATTAPAAPATTTTPDTATPLP).

This sequence belongs to the RodZ family.

Its subcellular location is the cell inner membrane. Its function is as follows. Cytoskeletal protein that is involved in cell-shape control through regulation of the length of the long axis. This chain is Cytoskeleton protein RodZ, found in Escherichia fergusonii (strain ATCC 35469 / DSM 13698 / CCUG 18766 / IAM 14443 / JCM 21226 / LMG 7866 / NBRC 102419 / NCTC 12128 / CDC 0568-73).